The following is a 115-amino-acid chain: Phosphoribosyl-ATP pyrophosphatase (115 aa).

Belongs to the PRA-PH family.

It localises to the cytoplasm. It catalyses the reaction 1-(5-phospho-beta-D-ribosyl)-ATP + H2O = 1-(5-phospho-beta-D-ribosyl)-5'-AMP + diphosphate + H(+). Its pathway is amino-acid biosynthesis; L-histidine biosynthesis; L-histidine from 5-phospho-alpha-D-ribose 1-diphosphate: step 2/9. In Saccharophagus degradans (strain 2-40 / ATCC 43961 / DSM 17024), this protein is Phosphoribosyl-ATP pyrophosphatase.